Reading from the N-terminus, the 172-residue chain is MRNLILVGPMGAGKSTIGRLLAKELRLPFKDSDKEIELRTGANIPWIFDKEGEPGFREREQAMIAELCEADGLVLATGGGAVMRGENRQALRAGGRVVYLHASIEQQVGRTARDRNRPLLRTADPARVLSELLAIRDPLYREIADVVIETDERPPRMVVLEILARLAELPPR.

11–16 is a binding site for ATP; the sequence is GAGKST. Position 15 (Ser-15) interacts with Mg(2+). Substrate-binding residues include Asp-33, Arg-57, and Gly-79. ATP is bound at residue Arg-117. Position 136 (Arg-136) interacts with substrate. Arg-153 is an ATP binding site.

This sequence belongs to the shikimate kinase family. In terms of assembly, monomer. The cofactor is Mg(2+).

It is found in the cytoplasm. The catalysed reaction is shikimate + ATP = 3-phosphoshikimate + ADP + H(+). It participates in metabolic intermediate biosynthesis; chorismate biosynthesis; chorismate from D-erythrose 4-phosphate and phosphoenolpyruvate: step 5/7. In terms of biological role, catalyzes the specific phosphorylation of the 3-hydroxyl group of shikimic acid using ATP as a cosubstrate. In Pseudomonas savastanoi pv. phaseolicola (strain 1448A / Race 6) (Pseudomonas syringae pv. phaseolicola (strain 1448A / Race 6)), this protein is Shikimate kinase.